We begin with the raw amino-acid sequence, 515 residues long: 2-isopropylmalate synthase (515 aa).

The 264-residue stretch at 5–268 (LIIFDTTLRD…DLGIDTTQIV (264 aa)) folds into the Pyruvate carboxyltransferase domain. Residues Asp14, His202, His204, and Asn239 each coordinate Mn(2+). Residues 396-515 (KFVSLAQRSE…NADKLNPQRA (120 aa)) form a regulatory domain region.

It belongs to the alpha-IPM synthase/homocitrate synthase family. LeuA type 1 subfamily. As to quaternary structure, homodimer. It depends on Mn(2+) as a cofactor.

It is found in the cytoplasm. The catalysed reaction is 3-methyl-2-oxobutanoate + acetyl-CoA + H2O = (2S)-2-isopropylmalate + CoA + H(+). It functions in the pathway amino-acid biosynthesis; L-leucine biosynthesis; L-leucine from 3-methyl-2-oxobutanoate: step 1/4. Catalyzes the condensation of the acetyl group of acetyl-CoA with 3-methyl-2-oxobutanoate (2-ketoisovalerate) to form 3-carboxy-3-hydroxy-4-methylpentanoate (2-isopropylmalate). The sequence is that of 2-isopropylmalate synthase from Burkholderia pseudomallei (strain 1106a).